Consider the following 227-residue polypeptide: MRVAGAAKLVVAVAVFLLTFYVISQVFEIKMDASLGSLFARSALDSAIRSTKPPRYKCGISKACPEKHFAFKMASGAANVVGPKICLEDNVLMSGVKNNVGRGINVALVNGKTGDVIDTKYFDMWGGDVAPFIEFLKTIQDGTVVLMATYDDGATKLTEEARRLIAELGSTSITSLGFRDNWVFCGGKGIKTKSPFEQHIKNNKDTNKYEGWPEVVEMEGCIPQKQD.

The N-terminal stretch at methionine 1–serine 24 is a signal peptide. Disulfide bonds link cysteine 58-cysteine 86 and cysteine 64-cysteine 221. A GG-type lectin domain is found at lysine 67–lysine 225.

This sequence belongs to the FAM3 family.

Its subcellular location is the secreted. The protein resides in the cytoplasmic vesicle. Its function is as follows. May be involved in retinal laminar formation. Promotes epithelial to mesenchymal transition. This is Protein FAM3C (Fam3c) from Rattus norvegicus (Rat).